Reading from the N-terminus, the 2320-residue chain is Bromodomain and WD repeat-containing protein 1 (2320 aa).

WD repeat units lie at residues 184-223, 226-265, 268-311, 322-365, 366-405, 424-463, 466-506, and 514-553; these read GHLS…LLST, GHSA…PVAV, GHTG…LKFS, RPGV…AELE, SHTD…WRSI, FMKP…LLHN, GHAD…KMKH, and QGHG…PYEK. The disordered stretch occupies residues 668–691; it reads QRMGADQDTIPRGLSNGEETPRRG. Phosphothreonine is present on threonine 687. 3 positions are modified to phosphoserine: serine 696, serine 701, and serine 710. Disordered regions lie at residues 809–867 and 895–925; these read NRSW…RYSD and SEDE…ENLR. Composition is skewed to low complexity over residues 814–824 and 854–867; these read ELSSGNESSSS and YSES…RYSD. Over residues 907-918 the composition is skewed to basic residues; it reads PKRRRKRKKENK. Residues 1157–1264 form the Bromo 1 domain; it reads WGQKSRDEEC…DQLLKFIKNQ (108 aa). Residues 1271-1304 form a disordered region; that stretch reads ELSNTSENDEQNAEDLDDSDLPKTSSGRRRVHDG. Over residues 1277–1289 the composition is skewed to acidic residues; that stretch reads ENDEQNAEDLDDS. Position 1289 is a phosphoserine (serine 1289). Positions 1313–1418 constitute a Bromo 2 domain; it reads YVESNWKKQC…ALFEEKMKKI (106 aa). The interval 1434-1593 is disordered; sequence RSQRFKQRQN…TGPVSLANGC (160 aa). The segment covering 1443–1454 has biased composition (polar residues); the sequence is NCKGDSQPNKSI. The segment covering 1455 to 1464 has biased composition (basic residues); sequence RNLKPKRLKS. Serine 1475 is modified (phosphoserine). The segment covering 1475–1496 has biased composition (polar residues); sequence SPTQSTSSRTAYLGTHKTSAGI. The residue at position 1477 (threonine 1477) is a Phosphothreonine. A Phosphoserine modification is found at serine 1479. Over residues 1497 to 1509 the composition is skewed to low complexity; that stretch reads SSGVTSGDSSDSA. Over residues 1520–1529 the composition is skewed to polar residues; it reads PITNGSTLSE. Positions 1535 to 1548 are enriched in low complexity; sequence SLATSLSSSASSSS. The span at 1549–1561 shows a compositional bias: basic and acidic residues; that stretch reads EESKESSRARESS. Phosphoserine is present on residues serine 1605, serine 1607, serine 1678, serine 1683, and serine 1686. Disordered regions lie at residues 1670-1805, 1817-1839, and 1862-1899; these read ARKK…KYNT, KILS…KCHK, and DHGC…KISR. Basic and acidic residues predominate over residues 1676–1687; that stretch reads HNSEDEQSLKSE. The span at 1701–1712 shows a compositional bias: polar residues; the sequence is PVSSSHTAQSNV. Composition is skewed to basic and acidic residues over residues 1715-1728 and 1751-1769; these read SENR…DLRV and LKIE…DHAC. A phosphoserine mark is found at serine 1755, serine 1756, serine 1786, serine 1788, serine 1793, and serine 1820. Over residues 1821–1832 the composition is skewed to acidic residues; that stretch reads DSEDSESEEQDR. Threonine 1867 is modified (phosphothreonine). Serine 1871, serine 1904, serine 1905, serine 1907, serine 1910, and serine 1943 each carry phosphoserine. The residue at position 1955 (threonine 1955) is a Phosphothreonine. Disordered regions lie at residues 2014-2077 and 2112-2184; these read LNGD…TLAQ and TKVI…TKGK. Phosphoserine occurs at positions 2018, 2020, and 2052. Composition is skewed to basic and acidic residues over residues 2054 to 2069 and 2114 to 2139; these read EDSK…DRTF and VIHD…ENVK. Residues 2140–2165 show a composition bias toward polar residues; that stretch reads ISETTGNSKFRPDTSSKSSDLGSVTE. At threonine 2164 the chain carries Phosphothreonine. 2 positions are modified to phosphoserine: serine 2166 and valine 2214.

In terms of assembly, interacts with SMARCA4. In terms of tissue distribution, ubiquitously expressed. Expressed in respiratory epithelial cells and testis spermatozoa.

It localises to the cytoplasm. The protein resides in the nucleus. It is found in the cell projection. Its subcellular location is the cilium membrane. The protein localises to the cytoskeleton. It localises to the flagellum axoneme. In terms of biological role, may be a transcriptional activator. May be involved in chromatin remodeling. Plays a role in the regulation of cell morphology and cytoskeletal organization. Required in the control of cell shape. In Homo sapiens (Human), this protein is Bromodomain and WD repeat-containing protein 1 (BRWD1).